The chain runs to 187 residues: Transmembrane protein 17A (187 aa).

A run of 4 helical transmembrane segments spans residues 49–69 (IFLY…VIML), 82–102 (FILV…LYLG), 114–134 (LAGF…FLLC), and 146–166 (AVHG…IFAL).

This sequence belongs to the TMEM17 family. As to quaternary structure, part of the tectonic-like complex (also named B9 complex).

Its subcellular location is the cell projection. The protein resides in the cilium membrane. In terms of biological role, transmembrane component of the tectonic-like complex, a complex localized at the transition zone of primary cilia and acting as a barrier that prevents diffusion of transmembrane proteins between the cilia and plasma membranes. Required for ciliogenesis and sonic hedgehog/SHH signaling. This chain is Transmembrane protein 17A (tmem17-a), found in Xenopus tropicalis (Western clawed frog).